Here is a 106-residue protein sequence, read N- to C-terminus: MNKIRKGDEIIVITGRDKGKRGTISLRVDDSYVLVDGINLVKKHTKPNPLKGTTGGIVEKSMPIHQSNVAIFNAASGKADRVGIKLLADGKKTRVFKSSGEEIKAA.

This sequence belongs to the universal ribosomal protein uL24 family. Part of the 50S ribosomal subunit.

One of two assembly initiator proteins, it binds directly to the 5'-end of the 23S rRNA, where it nucleates assembly of the 50S subunit. Its function is as follows. One of the proteins that surrounds the polypeptide exit tunnel on the outside of the subunit. This is Large ribosomal subunit protein uL24 from Polaromonas naphthalenivorans (strain CJ2).